A 273-amino-acid polypeptide reads, in one-letter code: Nickel import ATP-binding protein NikE (273 aa).

Residues 13-252 (YRTGGLLRKR…AHPVGRQLQA (240 aa)) form the ABC transporter domain. 45–52 (GSSGSGKS) provides a ligand contact to ATP.

It belongs to the ABC transporter superfamily. Nickel importer (TC 3.A.1.5.3) family. As to quaternary structure, the complex is composed of two ATP-binding proteins (NikD and NikE), two transmembrane proteins (NikB and NikC) and a solute-binding protein (NikA).

Its subcellular location is the cell inner membrane. It carries out the reaction Ni(2+)(out) + ATP + H2O = Ni(2+)(in) + ADP + phosphate + H(+). Part of the ABC transporter complex NikABCDE involved in nickel import. Responsible for energy coupling to the transport system. The chain is Nickel import ATP-binding protein NikE from Pseudomonas putida (strain ATCC 47054 / DSM 6125 / CFBP 8728 / NCIMB 11950 / KT2440).